The chain runs to 548 residues: MSETLNTPPTYAWVLKAFSSKLAGTVTKPVTKMSSYIEDAESDAELPQDAKEDLRPTETLTPLKSKAAQNGILKTPGTLQIKKTVNFKDISKDAATWNRPTKNNFLFTRLDDENPLMGHEEFKSPLLQSTPKPNINNPDNENKSKHDEFDNRYNININESYKNETKSNQRLGEDVPSKKKYPHSMDAEISKFKWDSNNNNDWSSLMKDCFRDVVNNNRKMKEIIKDVMIDTSQAFPSESLDEPDYTINLDAPRSSSGKYWKQKFSMLDSAHSDLELELTSIRERLESLILEKQEEINFWKQRCRALETEKIHNHQGQQSKYKGKEFVGNRFSQMRELYTAKPSPITTKVVSRPSQSDVREPQEQVPSKNLHRGADMSHLAAQMLTHSSKKSHTTNLIPSEGIISSTPISAASKVRMNLMQSNQTPTPAPFSIAAKKSHLPSKLSFPQDGGSLSSATTLQQLPKARVTPNVLSSLSSNLGKTNPTSVYQSKANVTTSADVEKPQVKVATSSRVDYDLKSPNQRTANAKKRLEERRRRRKLKLQELQLNS.

Residues 122 to 325 are interaction with plo1; sequence FKSPLLQSTP…GQQSKYKGKE (204 aa). The disordered stretch occupies residues 123 to 182; it reads KSPLLQSTPKPNINNPDNENKSKHDEFDNRYNININESYKNETKSNQRLGEDVPSKKKYP. The span at 126 to 139 shows a compositional bias: polar residues; the sequence is LLQSTPKPNINNPD. Basic and acidic residues-rich tracts occupy residues 140 to 151 and 161 to 182; these read NENKSKHDEFDN and YKNETKSNQRLGEDVPSKKKYP. Residues 261 to 312 adopt a coiled-coil conformation; that stretch reads KQKFSMLDSAHSDLELELTSIRERLESLILEKQEEINFWKQRCRALETEKIH. Positions 344–356 are enriched in polar residues; that stretch reads PITTKVVSRPSQS. 2 disordered regions span residues 344–369 and 510–548; these read PITTKVVSRPSQSDVREPQEQVPSKN and SRVDYDLKSPNQRTANAKKRLEERRRRRKLKLQELQLNS. Residues 522–548 are a coiled coil; sequence RTANAKKRLEERRRRRKLKLQELQLNS.

As to quaternary structure, self-associates. Interacts with plo1.

It localises to the cytoplasm. The protein localises to the cytoskeleton. Its subcellular location is the microtubule organizing center. It is found in the spindle pole body. Its function is as follows. Required for bipolar spindle formation. May act as a regulator of the p34cdc2/cyclin B kinase. Required for full activation of the plo1 kinase. However, in cut12.1 cells at restrictive temperature the H1 kinase does rise concomitant with entry into mitosis, indicating that cut12 is not required for activation of p34cdc2/cyclin B. The cut12.s11 allele may promote cdc2-independent phosphorylation of SPB proteins thereby overcoming the requirement for cdc25 in cell cycle progression. This is Spindle pole body-associated protein cut12 (cut12) from Schizosaccharomyces pombe (strain 972 / ATCC 24843) (Fission yeast).